Consider the following 647-residue polypeptide: Threonine--tRNA ligase (647 aa).

Residues 1–61 enclose the TGS domain; it reads MIKITFPDGA…EEDGSIEIVT (61 aa). A catalytic region spans residues 240-538; it reads DHRKLGKELD…LIETYKGAFP (299 aa). 3 residues coordinate Zn(2+): cysteine 334, histidine 385, and histidine 515.

The protein belongs to the class-II aminoacyl-tRNA synthetase family. Homodimer. Zn(2+) serves as cofactor.

It is found in the cytoplasm. It catalyses the reaction tRNA(Thr) + L-threonine + ATP = L-threonyl-tRNA(Thr) + AMP + diphosphate + H(+). In terms of biological role, catalyzes the attachment of threonine to tRNA(Thr) in a two-step reaction: L-threonine is first activated by ATP to form Thr-AMP and then transferred to the acceptor end of tRNA(Thr). Also edits incorrectly charged L-seryl-tRNA(Thr). This is Threonine--tRNA ligase from Streptococcus pyogenes serotype M2 (strain MGAS10270).